The sequence spans 197 residues: Putative glutathione-dependent formaldehyde-activating enzyme (197 aa).

The 150-residue stretch at 22–171 (FPGGKLYCHC…LKSLGLENYD (150 aa)) folds into the CENP-V/GFA domain. The Zn(2+) site is built by cysteine 29, cysteine 31, cysteine 50, cysteine 52, cysteine 55, cysteine 97, and cysteine 100.

This sequence belongs to the Gfa family. Zn(2+) serves as cofactor.

It carries out the reaction S-(hydroxymethyl)glutathione = glutathione + formaldehyde. It functions in the pathway one-carbon metabolism; formaldehyde degradation; formate from formaldehyde (glutathione route): step 1/3. Its function is as follows. Catalyzes the condensation of formaldehyde and glutathione to S-hydroxymethylglutathione. The chain is Putative glutathione-dependent formaldehyde-activating enzyme from Emericella nidulans (strain FGSC A4 / ATCC 38163 / CBS 112.46 / NRRL 194 / M139) (Aspergillus nidulans).